A 198-amino-acid chain; its full sequence is MVEKHLLEFLEKLQFLIAKNVKISHYGIENVKKICGVDIAYKGNLGFSVGVSMDINSGDYNYKSYVGEVNFPYIPGFLFMREAPLMIKAIEGLDCHLLLVDGHGIAHPRKSGIAAVIGVLLDFPTIGVAKSRLTGDLVNESEITYVYLNGEKVGVKFGRYFYSPGNKVDLQDCIELGKRGYPKVLKIADMLTKKIKKE.

Residues D38 and D101 each coordinate Mg(2+).

This sequence belongs to the endonuclease V family. Mg(2+) is required as a cofactor.

It localises to the cytoplasm. The catalysed reaction is Endonucleolytic cleavage at apurinic or apyrimidinic sites to products with a 5'-phosphate.. Its function is as follows. DNA repair enzyme involved in the repair of deaminated bases. Selectively cleaves double-stranded DNA at the second phosphodiester bond 3' to a deoxyinosine leaving behind the intact lesion on the nicked DNA. The polypeptide is Endonuclease V (Saccharolobus islandicus (strain M.14.25 / Kamchatka #1) (Sulfolobus islandicus)).